We begin with the raw amino-acid sequence, 2599 residues long: Protein DOP1 homolog (2599 aa).

Disordered stretches follow at residues 532–571 (EQSG…SDSR) and 595–701 (ASNQ…LDEE). Polar residues-rich tracts occupy residues 534–549 (SGGS…NSAS), 595–604 (ASNQSVGRQS), and 625–636 (ASDTGQQSSSDL). At Ser-753 the chain carries Phosphoserine. A compositionally biased stretch (basic and acidic residues) spans 1240 to 1251 (PRIEIPHKETPL). Disordered stretches follow at residues 1240-1316 (PRIE…SSSA) and 1347-1368 (TYRL…EQKD). Polar residues predominate over residues 1264–1282 (QPSQEQPANQPDNSLQYDQ). A compositionally biased stretch (basic and acidic residues) spans 1297 to 1309 (SELRETSIEKEDS). The residue at position 1355 (Thr-1355) is a Phosphothreonine. 3 positions are modified to phosphoserine: Ser-1360, Ser-1363, and Ser-1371. The tract at residues 1409 to 1442 (CISKTSTDSNISGSHVEQPEQEEETEPGTESTIN) is disordered. Residues 1410 to 1423 (ISKTSTDSNISGSH) are compositionally biased toward polar residues. At Ser-2525 the chain carries Phosphoserine.

Belongs to the DOP1 family.

The protein resides in the golgi apparatus membrane. In terms of biological role, may be involved in protein traffic between late Golgi and early endosomes. This Drosophila melanogaster (Fruit fly) protein is Protein DOP1 homolog.